Reading from the N-terminus, the 376-residue chain is Probable allantoicase (376 aa).

The protein belongs to the allantoicase family.

The catalysed reaction is allantoate + H2O = (S)-ureidoglycolate + urea. It participates in nitrogen metabolism; (S)-allantoin degradation; (S)-ureidoglycolate from allantoate (aminidohydrolase route): step 1/1. This is Probable allantoicase from Streptomyces avermitilis (strain ATCC 31267 / DSM 46492 / JCM 5070 / NBRC 14893 / NCIMB 12804 / NRRL 8165 / MA-4680).